The chain runs to 293 residues: Triosephosphate isomerase (293 aa).

25–27 serves as a coordination point for substrate; that stretch reads NWK. Catalysis depends on histidine 117, which acts as the Electrophile. The Proton acceptor role is filled by glutamate 218.

This sequence belongs to the triosephosphate isomerase family. In terms of assembly, homodimer.

The protein resides in the cytoplasm. It catalyses the reaction D-glyceraldehyde 3-phosphate = dihydroxyacetone phosphate. Its pathway is carbohydrate biosynthesis; gluconeogenesis. The protein operates within carbohydrate degradation; glycolysis; D-glyceraldehyde 3-phosphate from glycerone phosphate: step 1/1. Functionally, involved in the gluconeogenesis. Catalyzes stereospecifically the conversion of dihydroxyacetone phosphate (DHAP) to D-glyceraldehyde-3-phosphate (G3P). The polypeptide is Triosephosphate isomerase (Tropheryma whipplei (strain TW08/27) (Whipple's bacillus)).